The following is a 466-amino-acid chain: mRNA-capping enzyme subunit alpha (466 aa).

The active-site N6-GMP-lysine intermediate is the lysine 67. The interval 408 to 466 (REQGLKNAQKQFNHQASARSSLSQQHSTEPEQSQDQPKYVDDDDDNWSDDEPDTKRQKI) is disordered. The span at 413 to 443 (KNAQKQFNHQASARSSLSQQHSTEPEQSQDQ) shows a compositional bias: polar residues. Residues 448–459 (DDDDDNWSDDEP) are compositionally biased toward acidic residues.

The protein belongs to the eukaryotic GTase family. In terms of assembly, heterodimer. The mRNA-capping enzyme is composed of two separate chains alpha and beta, respectively a mRNA guanylyltransferase and an mRNA 5'-triphosphate monophosphatase.

The protein localises to the nucleus. The catalysed reaction is a 5'-end diphospho-ribonucleoside in mRNA + GTP + H(+) = a 5'-end (5'-triphosphoguanosine)-ribonucleoside in mRNA + diphosphate. Functionally, second step of mRNA capping. Transfer of the GMP moiety of GTP to the 5'-end of RNA via an enzyme-GMP covalent reaction intermediate. The polypeptide is mRNA-capping enzyme subunit alpha (CEG1) (Kluyveromyces lactis (strain ATCC 8585 / CBS 2359 / DSM 70799 / NBRC 1267 / NRRL Y-1140 / WM37) (Yeast)).